The primary structure comprises 279 residues: Prephenate dehydratase (279 aa).

A Prephenate dehydratase domain is found at 2–178 (KIAYLGPRGS…NSTRFWLLGK (177 aa)). Positions 194 to 272 (LALTLPDNLP…VNVRLLGNYS (79 aa)) constitute an ACT domain.

It carries out the reaction prephenate + H(+) = 3-phenylpyruvate + CO2 + H2O. Its pathway is amino-acid biosynthesis; L-phenylalanine biosynthesis; phenylpyruvate from prephenate: step 1/1. In Lactococcus lactis subsp. cremoris (strain MG1363), this protein is Prephenate dehydratase (pheA).